The following is a 143-amino-acid chain: Glycine cleavage system H protein 1 (143 aa).

In terms of domain architecture, Lipoyl-binding spans 26–107 (IYSVGMASIL…PYSSWIAKLK (82 aa)). The residue at position 67 (Lys67) is an N6-lipoyllysine.

This sequence belongs to the GcvH family. As to quaternary structure, the glycine cleavage system is composed of four proteins: P, T, L and H. It depends on (R)-lipoate as a cofactor.

In terms of biological role, the glycine cleavage system catalyzes the degradation of glycine. The H protein shuttles the methylamine group of glycine from the P protein to the T protein. The protein is Glycine cleavage system H protein 1 of Aquifex aeolicus (strain VF5).